Consider the following 334-residue polypeptide: Retinol dehydrogenase 14 (334 aa).

Position 51-57 (51-57 (GANSGLG)) interacts with NADP(+). Position 190 (serine 190) interacts with substrate. The active-site Proton acceptor is the tyrosine 215.

Belongs to the short-chain dehydrogenases/reductases (SDR) family.

The catalysed reaction is all-trans-retinol + NADP(+) = all-trans-retinal + NADPH + H(+). It carries out the reaction 11-cis-retinol + NADP(+) = 11-cis-retinal + NADPH + H(+). It catalyses the reaction 9-cis-retinol + NADP(+) = 9-cis-retinal + NADPH + H(+). Retinol dehydrogenase with a clear preference for NADP. Displays high activity towards 9-cis, 11-cis and all-trans-retinol. Shows a very weak activity towards 13-cis-retinol. Has no activity towards steroids. This chain is Retinol dehydrogenase 14 (Rdh14), found in Mus musculus (Mouse).